Here is a 258-residue protein sequence, read N- to C-terminus: Protein IMPACT homolog (258 aa).

Positions 10 to 114 (EELEAVEAIY…TELDGVLYVE (105 aa)) constitute an RWD domain. Lysine 187 participates in a covalent cross-link: Glycyl lysine isopeptide (Lys-Gly) (interchain with G-Cter in ubiquitin).

This sequence belongs to the IMPACT family. Interacts (via N-terminus) with GCN1 (via C-terminus); this interaction reduces the GCN1-GCN20 complex formation and prevents the interaction of GCN1 with GCN2 protein kinase and GCN2 activation in amino acid-starved cells. Interacts (via C-terminus) with ACT1; this interaction occurs in a GCN1-independent manner. Interacts with RPL39; this interaction occurs in a GCN1-independent manner. Associates (via middle region) with ribosomes; this association occurs in a GCN1-independent manner and persists under amino acid starvation conditions.

It is found in the cytoplasm. It localises to the nucleus. Translational regulator that ensures constant high levels of translation under amino acid starvation. Plays a role as a negative regulator of the GCN2 kinase activity; impairs GCN1-mediated GCN2 activation, and hence GCN2-mediated eIF-2-alpha phosphorylation in amino acid-starved cells and subsequent down-regulation of protein synthesis. In normal conditions, it resides in a actin complex and has no activity. In Saccharomyces cerevisiae (strain ATCC 204508 / S288c) (Baker's yeast), this protein is Protein IMPACT homolog (YIH1).